The following is a 357-amino-acid chain: Neuronal-specific septin-3 (357 aa).

The segment covering 1–10 has biased composition (basic and acidic residues); that stretch reads MSKGLPETRT. The tract at residues 1-29 is disordered; the sequence is MSKGLPETRTDAAMSELVPEPRPKPAVPM. One can recognise a Septin-type G domain in the interval 58-330; that stretch reads TGFDFNIMVV…ETYRAKRLND (273 aa). Residues 68–75 form a G1 motif region; sequence GQSGLGKS. 68–75 provides a ligand contact to GTP; the sequence is GQSGLGKS. Phosphoserine is present on Ser-91. Thr-102 provides a ligand contact to GTP. Residues 125-128 form a G3 motif region; it reads DTPG. The G4 motif stretch occupies residues 207–210; the sequence is AKAD. GTP-binding positions include 208–216, Gly-264, and Arg-279; that span reads KADTMTLEE.

The protein belongs to the TRAFAC class TrmE-Era-EngA-EngB-Septin-like GTPase superfamily. Septin GTPase family. Septins polymerize into heterooligomeric protein complexes that form filaments, and can associate with cellular membranes, actin filaments and microtubules. GTPase activity is required for filament formation. In terms of processing, phosphorylated by PKG on serine residues. Phosphorylated by PKG on Ser-91.

Its subcellular location is the cytoplasm. The protein localises to the cytoskeleton. It is found in the synapse. In terms of biological role, filament-forming cytoskeletal GTPase. May play a role in cytokinesis (Potential). This is Neuronal-specific septin-3 from Bos taurus (Bovine).